Reading from the N-terminus, the 480-residue chain is Glucosylglycerol phosphorylase (480 aa).

Catalysis depends on aspartate 190, which acts as the Nucleophile. Tyrosine 194 contributes to the substrate binding site. The active-site Proton donor is glutamate 231. Glutamine 336 contacts substrate.

Belongs to the glycosyl hydrolase 13 family. Sucrose phosphorylase subfamily.

It carries out the reaction 2-O-(alpha-D-glucopyranosyl)glycerol + phosphate = alpha-D-glucose 1-phosphate + glycerol. Functionally, catalyzes the reversible phosphorolysis of 2-O-alpha-D-glucosylglycerol with retention of the anomeric configuration, forming alpha-D-glucose 1-phosphate and glycerol. Has most likely a catabolic role, either regulating the intracellular levels of glucosylglycerol, which acts as a compatible solute, or degrading it when the environmental conditions change. Cannot catalyze the phosphorolysis of sucrose or glucosylglycerate. The polypeptide is Glucosylglycerol phosphorylase (Marinobacter adhaerens (strain DSM 23420 / HP15)).